The following is a 315-amino-acid chain: Replication factor C small subunit (315 aa).

Position 43 to 50 (Gly-43 to Thr-50) interacts with ATP.

Belongs to the activator 1 small subunits family. RfcS subfamily. Heteromultimer composed of small subunits (RfcS) and large subunits (RfcL).

In terms of biological role, part of the RFC clamp loader complex which loads the PCNA sliding clamp onto DNA. This is Replication factor C small subunit from Methanococcus maripaludis (strain DSM 14266 / JCM 13030 / NBRC 101832 / S2 / LL).